The following is a 220-amino-acid chain: Deoxyribose-phosphate aldolase (220 aa).

Catalysis depends on aspartate 89, which acts as the Proton donor/acceptor. Residue lysine 151 is the Schiff-base intermediate with acetaldehyde of the active site. Lysine 180 (proton donor/acceptor) is an active-site residue.

The protein belongs to the DeoC/FbaB aldolase family. DeoC type 1 subfamily. In terms of assembly, homotetramer, in solution and in the crystal structure.

It is found in the cytoplasm. The enzyme catalyses 2-deoxy-D-ribose 5-phosphate = D-glyceraldehyde 3-phosphate + acetaldehyde. It functions in the pathway carbohydrate degradation; 2-deoxy-D-ribose 1-phosphate degradation; D-glyceraldehyde 3-phosphate and acetaldehyde from 2-deoxy-alpha-D-ribose 1-phosphate: step 2/2. In terms of biological role, catalyzes a reversible aldol reaction between acetaldehyde and D-glyceraldehyde 3-phosphate to generate 2-deoxy-D-ribose 5-phosphate. This Thermus thermophilus (strain ATCC 27634 / DSM 579 / HB8) protein is Deoxyribose-phosphate aldolase.